A 307-amino-acid chain; its full sequence is Undecaprenyl-diphosphatase 2 (307 aa).

8 consecutive transmembrane segments (helical) span residues 19 to 41 (GVTE…IIGF), 56 to 76 (IHMF…VLYW), 117 to 137 (FKFW…GLPF), 144 to 164 (LLFF…WMIF), 208 to 228 (IIGA…SFFL), 229 to 249 (AIPM…VVLS), 251 to 271 (VQIL…LVVV), and 285 to 305 (IFAV…FTKV).

The protein belongs to the UppP family.

The protein resides in the cell membrane. It catalyses the reaction di-trans,octa-cis-undecaprenyl diphosphate + H2O = di-trans,octa-cis-undecaprenyl phosphate + phosphate + H(+). Catalyzes the dephosphorylation of undecaprenyl diphosphate (UPP). Confers resistance to bacitracin. The sequence is that of Undecaprenyl-diphosphatase 2 from Clostridium acetobutylicum (strain ATCC 824 / DSM 792 / JCM 1419 / IAM 19013 / LMG 5710 / NBRC 13948 / NRRL B-527 / VKM B-1787 / 2291 / W).